We begin with the raw amino-acid sequence, 481 residues long: MDLSNLTLTKIQELVLTKKCKIYDILLAYKNNYELNKDINGYIEFFDDSLDIAKRYDDCLKNCELEDLPLIGMPIAVKDNISIQDKSLTCASEILKGYISPYDATVIKRLKNKGAILIGKTNMDEFAMGSTGEFSCYGATLNPLNREYVIGGSSGGSAAVVASFQAPFSLGSDTGGSVRLPASFSGILGFKPSYGGLSRYGLASYASSFDQIGFFSHSIEDIALILKHTCGADKMDSTSVDIFDDFYPLKTEPLQGKNLALIKELSEDLMDKNVASSFAKFKFDLLSKGANIKEVSIEEINFILSIYYTISPVEASSNLARYTGLCYGKRISENLSLNDFYFKHRSNFLSEEVKRRIILGNYLLSEGYDAKYYAKACEILQNLIIPKFNKLFESCDFIITPTSFVKPFRVGLDFDDPVKMYYSDICTVIANLIGAPAISLPYSKDKEGLSIGMQIIGRSKKDFELLSFSKNVIRELGLNGI.

Residues lysine 78 and serine 153 each act as charge relay system in the active site. Catalysis depends on serine 177, which acts as the Acyl-ester intermediate.

Belongs to the amidase family. GatA subfamily. In terms of assembly, heterotrimer of A, B and C subunits.

The catalysed reaction is L-glutamyl-tRNA(Gln) + L-glutamine + ATP + H2O = L-glutaminyl-tRNA(Gln) + L-glutamate + ADP + phosphate + H(+). Functionally, allows the formation of correctly charged Gln-tRNA(Gln) through the transamidation of misacylated Glu-tRNA(Gln) in organisms which lack glutaminyl-tRNA synthetase. The reaction takes place in the presence of glutamine and ATP through an activated gamma-phospho-Glu-tRNA(Gln). The protein is Glutamyl-tRNA(Gln) amidotransferase subunit A of Borrelia garinii subsp. bavariensis (strain ATCC BAA-2496 / DSM 23469 / PBi) (Borreliella bavariensis).